A 232-amino-acid chain; its full sequence is MAKISKRRQAFEAKVDRQKLYAIEDALALVKECASAKFNESIDVAVQLGIDAKKSDQVVRGSVVLPAGTGKSVRVAVFAQGEKAEQARAAGAEIVGMEDLAEQIKAGQMDFDIVIASPDTMRIVGTLGQILGPRGLMPNPKVGTVTPDVATAVKNAKAGQVQFRVDKAGIIHATIGRASFEATALRSNLSALIEALQKAKPATSKGVYLRKIALSSTMGVGVRVDQATLAAQ.

It belongs to the universal ribosomal protein uL1 family. As to quaternary structure, part of the 50S ribosomal subunit.

In terms of biological role, binds directly to 23S rRNA. The L1 stalk is quite mobile in the ribosome, and is involved in E site tRNA release. Protein L1 is also a translational repressor protein, it controls the translation of the L11 operon by binding to its mRNA. The sequence is that of Large ribosomal subunit protein uL1 from Burkholderia vietnamiensis (strain G4 / LMG 22486) (Burkholderia cepacia (strain R1808)).